The sequence spans 791 residues: Biofilm architecture maintenance protein MbaA (791 aa).

The first 23 residues, 1–23 (MKLNHRILLLIAPVILLSAAASS), serve as a signal peptide directing secretion. Residues 24–259 (YIIYTSQKNA…NAQLHSIQRE (236 aa)) are Periplasmic-facing. A helical transmembrane segment spans residues 260–280 (LLLSFGVSALVTVLMLLLLLY). Residues 281–333 (RHVINPILHLDKQLEEVENNQRKNIEKLNTDDEIGRLSSRFYAMYSELHSTYQ) enclose the HAMP domain. The Cytoplasmic portion of the chain corresponds to 281 to 791 (RHVINPILHL…FTEPSQSECR (511 aa)). In terms of domain architecture, GGDEF spans 368–509 (QHIWVMYIDL…GKNQVAYYSQ (142 aa)). The EAL domain occupies 518 to 769 (RNNIERALRL…EISPWLHASN (252 aa)).

It localises to the cell inner membrane. In terms of biological role, plays an essential role in the maintenance and the formation of the three-dimensional structure of the biofilms at the later stages of their development. Absence of mbaA promotes the accumulation of larger amount of biomass on the surfaces at later stage of development, results in the overproduction of an extracellular polymeric substance that accumulates in the matrix of biofilms. This yields biofilms lacking the typical structure consisting of pillars of cells separated by fluid filled channels. The sequence is that of Biofilm architecture maintenance protein MbaA (mbaA) from Vibrio cholerae serotype O1 (strain ATCC 39315 / El Tor Inaba N16961).